We begin with the raw amino-acid sequence, 173 residues long: Cytochrome c-type biogenesis protein CcmE (173 aa).

Topologically, residues 1–8 are cytoplasmic; it reads MMSRKKRR. The chain crosses the membrane as a helical; Signal-anchor for type II membrane protein span at residues 9-29; that stretch reads LWIVIACGIGLSTAVALMLFA. The Periplasmic segment spans residues 30–173; sequence FRSSLSFFMS…PAQIEASNNG (144 aa). The heme site is built by H127 and Y131. Residues 145–173 are disordered; sequence KWNPKFGPPPNAGAWDDKSPAQIEASNNG.

This sequence belongs to the CcmE/CycJ family.

The protein localises to the cell inner membrane. In terms of biological role, heme chaperone required for the biogenesis of c-type cytochromes. Transiently binds heme delivered by CcmC and transfers the heme to apo-cytochromes in a process facilitated by CcmF and CcmH. The sequence is that of Cytochrome c-type biogenesis protein CcmE from Acidiphilium cryptum (strain JF-5).